The following is a 527-amino-acid chain: Ribonuclease Y (527 aa).

A helical transmembrane segment spans residues 21 to 41 (ILAIFFSFIIGIVFGGMALFV). The segment at 78–97 (READKTRNSAETELKERRSE) is disordered. Residues 217 to 302 (TTNVVPLPSD…EVVTKAKEEV (86 aa)) form the KH domain. Residues 343-436 (VLQHSIEVAQ…VSAADAISSA (94 aa)) form the HD domain.

The protein belongs to the RNase Y family.

It is found in the cell membrane. Endoribonuclease that initiates mRNA decay. This is Ribonuclease Y from Dehalococcoides mccartyi (strain ATCC BAA-2100 / JCM 16839 / KCTC 5957 / BAV1).